The chain runs to 217 residues: Nascent polypeptide-associated complex subunit alpha-like protein 2 (217 aa).

Residues 1 to 81 (MSPPPAVVTE…SEKKSRKAML (81 aa)) are disordered. The segment covering 37–60 (PIVEDVKDDEDDDDDDEEEEDDDA) has biased composition (acidic residues). Residues 70-135 (SRSEKKSRKA…AKIEDLSSQL (66 aa)) enclose the NAC-A/B domain. Residues 178-215 (VEARDIDLVMTQAGVSRSKAVKALKSHDGDIVSAIMEL) enclose the UBA domain.

The protein belongs to the NAC-alpha family.

Functionally, may promote appropriate targeting of ribosome-nascent polypeptide complexes. In Arabidopsis thaliana (Mouse-ear cress), this protein is Nascent polypeptide-associated complex subunit alpha-like protein 2.